Reading from the N-terminus, the 231-residue chain is Chalcone--flavanone isomerase (231 aa).

3 residues coordinate substrate: threonine 46, asparagine 111, and serine 188.

The protein belongs to the chalcone isomerase family. Pericarp.

It catalyses the reaction a chalcone = a flavanone.. The protein operates within secondary metabolite biosynthesis; flavonoid biosynthesis. Its function is as follows. Catalyzes the intramolecular cyclization of bicyclic chalcones into tricyclic (S)-flavanones. Responsible for the isomerization of 4,2',4',6'-tetrahydroxychalcone (also termed chalcone) into naringenin. This is Chalcone--flavanone isomerase (CHI) from Zea mays (Maize).